Reading from the N-terminus, the 133-residue chain is Type VI secretion amidase effector 2 protein (133 aa).

Catalysis depends on residues cysteine 23 and histidine 73.

Belongs to the cell wall amidase Dae2/Tae2-like family.

It localises to the host periplasm. It is found in the secreted. It functions in the pathway cell wall degradation; peptidoglycan degradation. Toxic component of a contact-dependent interbacterial competition system (also called effector-immunity systems). Secreted by the SPI-6 type VI secretion system, probably into the periplasm of bacterial target cells. A cell wall amidase with specificity toward the D-meso-DAP-D-alanine bond (D-meso-diaminopimelic-D-alanine) found in peptidoglycan of Gram-negative bacteria. Toxicity is counteracted by a cognate immunity protein Tai2 (t2585), but not immunity proteins associated with a similar endopeptidase in other bacteria. In vitro degrades peptidoglycans from Gram-negative but not Gram-positive bacteria. This chain is Type VI secretion amidase effector 2 protein, found in Salmonella typhi.